The chain runs to 762 residues: 5-methyltetrahydropteroyltriglutamate--homocysteine methyltransferase (762 aa).

5-methyltetrahydropteroyltri-L-glutamate contacts are provided by residues 17–20 and K111; that span reads REWK. L-homocysteine-binding positions include 435 to 437 and E488; that span reads IGS. L-methionine is bound by residues 435-437 and E488; that span reads IGS. Residues 519–520 and W565 contribute to the 5-methyltetrahydropteroyltri-L-glutamate site; that span reads RC. D603 is an L-homocysteine binding site. D603 contributes to the L-methionine binding site. Position 609 (E609) interacts with 5-methyltetrahydropteroyltri-L-glutamate. Residues H645, C647, and E669 each coordinate Zn(2+). The active-site Proton donor is H698. Residue C730 participates in Zn(2+) binding.

The protein belongs to the vitamin-B12 independent methionine synthase family. Zn(2+) is required as a cofactor.

The enzyme catalyses 5-methyltetrahydropteroyltri-L-glutamate + L-homocysteine = tetrahydropteroyltri-L-glutamate + L-methionine. The protein operates within amino-acid biosynthesis; L-methionine biosynthesis via de novo pathway; L-methionine from L-homocysteine (MetE route): step 1/1. Functionally, catalyzes the transfer of a methyl group from 5-methyltetrahydrofolate to homocysteine resulting in methionine formation. In Bacillus cytotoxicus (strain DSM 22905 / CIP 110041 / 391-98 / NVH 391-98), this protein is 5-methyltetrahydropteroyltriglutamate--homocysteine methyltransferase.